A 765-amino-acid chain; its full sequence is Transient receptor potential cation channel subfamily V member 6 (765 aa).

At 1–367 the chain is on the cytoplasmic side; it reads MGPLQGDGGP…SLKWKRYGRP (367 aa). ANK repeat units lie at residues 84–114, 118–147, and 156–185; these read IWES…KVHQ, MGET…ELVF, and EGQT…SVSA. The interval 133–143 is interaction with calmodulin; the sequence is EAAMVLMEAAP. Tyr-201 is modified (phosphotyrosine; by SRC). 3 ANK repeats span residues 202–231, 235–277, and 279–308; these read FGEH…DIRA, LGNT…LVPN, and QGLT…HTQW. The helical transmembrane segment at 368 to 388 threads the bilayer; sequence YFCMLGAIYLLYIICFTMCCI. Residues 389–425 are Extracellular-facing; that stretch reads YRPLKPRTNNRTSPRDNTLLQQKLLQEAYMTPKDDIR. Asn-398 is a glycosylation site (N-linked (GlcNAc...) asparagine). The helical transmembrane segment at 426–448 threads the bilayer; sequence LVGELVTVIGAIIILLVEVPDIF. The Cytoplasmic portion of the chain corresponds to 449–463; it reads RMGVTRFFGQTILGG. The chain crosses the membrane as a helical span at residues 464 to 483; the sequence is PFHVLIITYAFMVLVTMVMR. Residues 484 to 489 lie on the Extracellular side of the membrane; that stretch reads LISASG. A helical transmembrane segment spans residues 490–509; the sequence is EVVPMSFALVLGWCNVMYFA. Residues 510-529 lie on the Cytoplasmic side of the membrane; that stretch reads RGFQMLGPFTIMIQKMIFGD. The chain crosses the membrane as a helical span at residues 530–552; sequence LMRFCWLMAVVILGFASAFYIIF. At 553–565 the chain is on the extracellular side; sequence QTEDPEELGHFYD. Positions 566 to 585 form an intramembrane region, pore-forming; it reads YPMALFSTFELFLTIIDGPA. A Selectivity filter motif is present at residues 581–585; sequence IDGPA. Asp-582 provides a ligand contact to Ca(2+). Residues 586 to 596 are Extracellular-facing; the sequence is NYNVDLPFMYS. The helical transmembrane segment at 597–617 threads the bilayer; the sequence is ITYAAFAIIATLLMLNLLIAM. The Cytoplasmic portion of the chain corresponds to 618 to 765; the sequence is MGDTHWRVAH…EDGESWEYQI (148 aa). Positions 638-642 are interaction with S100A10; that stretch reads VATTV. Positions 731 to 751 are interaction with calmodulin; that stretch reads SSANWERLRQGTLRRDLRGII. Thr-742 is subject to Phosphothreonine; by PKC/PRKCA.

This sequence belongs to the transient receptor (TC 1.A.4) family. TrpV subfamily. TRPV6 sub-subfamily. As to quaternary structure, homotetramer. Probably also forms heterotetramers with TRPV5. Interacts with TRPV5. Interacts with S100A10 and probably with the ANAX2-S100A10 heterotetramer. The interaction with S100A10 is required for the trafficking to the plasma membrane. Interacts with BSPRY. Interacts with TCAF1 and TCAF2 isoform 2. Interacts with calmodulin. In terms of processing, glycosylated. Post-translationally, phosphorylation at Tyr-201 by SRC leads to an increased calcium influx through the channel. Probably dephosphorylated at this site by PTPN1. Phosphorylation by PRKCA at the calmodulin binding site delays channel inactivation. Expressed at high levels in the gastrointestinal tract, including esophagus, stomach, duodenum, jejunum, ileum and colon, and in pancreas, placenta, prostate and salivary gland. Expressed at moderate levels in liver, kidney and testis. Expressed in trophoblasts of placenta villus trees (at protein level). Expressed in locally advanced prostate cancer, metastatic and androgen-insensitive prostatic lesions but not detected in healthy prostate tissue and benign prostatic hyperplasia.

It localises to the cell membrane. It carries out the reaction Ca(2+)(in) = Ca(2+)(out). Its function is as follows. Calcium selective cation channel that mediates Ca(2+) uptake in various tissues, including the intestine. Important for normal Ca(2+) ion homeostasis in the body, including bone and skin. The channel is activated by low internal calcium level, probably including intracellular calcium store depletion, and the current exhibits an inward rectification. Inactivation includes both a rapid Ca(2+)-dependent and a slower Ca(2+)-calmodulin-dependent mechanism; the latter may be regulated by phosphorylation. In vitro, is slowly inhibited by Mg(2+) in a voltage-independent manner. Heteromeric assembly with TRPV5 seems to modify channel properties. TRPV5-TRPV6 heteromultimeric concatemers exhibit voltage-dependent gating. In Homo sapiens (Human), this protein is Transient receptor potential cation channel subfamily V member 6 (TRPV6).